The following is a 294-amino-acid chain: UDP-3-O-acyl-N-acetylglucosamine deacetylase (294 aa).

3 residues coordinate Zn(2+): His75, His232, and Asp236. His259 serves as the catalytic Proton donor.

Belongs to the LpxC family. Requires Zn(2+) as cofactor.

The catalysed reaction is a UDP-3-O-[(3R)-3-hydroxyacyl]-N-acetyl-alpha-D-glucosamine + H2O = a UDP-3-O-[(3R)-3-hydroxyacyl]-alpha-D-glucosamine + acetate. Its pathway is glycolipid biosynthesis; lipid IV(A) biosynthesis; lipid IV(A) from (3R)-3-hydroxytetradecanoyl-[acyl-carrier-protein] and UDP-N-acetyl-alpha-D-glucosamine: step 2/6. In terms of biological role, catalyzes the hydrolysis of UDP-3-O-myristoyl-N-acetylglucosamine to form UDP-3-O-myristoylglucosamine and acetate, the committed step in lipid A biosynthesis. The protein is UDP-3-O-acyl-N-acetylglucosamine deacetylase of Campylobacter lari (strain RM2100 / D67 / ATCC BAA-1060).